Reading from the N-terminus, the 514-residue chain is Voltage-gated potassium channel regulatory subunit KCNG1 (514 aa).

Over 1-224 (MTLLPGDNSH…DMVERPHSGL (224 aa)) the chain is Cytoplasmic. Positions 180-196 (MEREEEEEPLDSEDQES) are enriched in acidic residues. A disordered region spans residues 180–205 (MEREEEEEPLDSEDQESEGPSASEGR). A helical membrane pass occupies residues 225–246 (PGKVFACLSVLFVTVTAVNLSV). The Extracellular segment spans residues 247-267 (STLPSLREEEEQGQCSQMCHN). A helical membrane pass occupies residues 268–289 (VFIVESVCVGWFSLEFLLRFIQ). The Cytoplasmic segment spans residues 290–300 (APSKFAFLRSP). Residues 301 to 321 (LTLIDLVAILPYYVTLLVDGA) traverse the membrane as a helical segment. Over 322–338 (ASSRRKPSTGNSYLDKV) the chain is Extracellular. Residues 339 to 359 (GLVLRVLRALRILYVMRLARH) form a helical; Voltage-sensor membrane-spanning segment. Residues 360-374 (SLGLQTLGLTARRCT) are Cytoplasmic-facing. Residues 375–396 (REFGLLLLFLCVAIALFAPLLY) traverse the membrane as a helical segment. The Extracellular portion of the chain corresponds to 397 to 411 (VIENEMADSPEFTSI). Residues 412–423 (PACYWWAVITMT) constitute an intramembrane region (helical). A Selectivity filter motif is present at residues 424-429 (TVGYGD). The stretch at 424–431 (TVGYGDMV) is an intramembrane region. Topologically, residues 432–438 (PRSTPGQ) are extracellular. The chain crosses the membrane as a helical span at residues 439–467 (VVALSSILSGILLMAFPVTSIFHTFSRSY). Topologically, residues 468-514 (LELKQEQERVLIRRAQYLIKTKSQLSGMSQDSDILFGSASSDTRDNN) are cytoplasmic.

Belongs to the potassium channel family. G (TC 1.A.1.2) subfamily. Kv6.1/KCNG1 sub-subfamily. As to quaternary structure, heterotetramer with KCNB1 or KCNB2.

It is found in the cell membrane. Its function is as follows. Regulatory alpha-subunit of the voltage-gated potassium (Kv) channel which, when coassembled with KCNB1 or KCNB2, can modulate their expression and their gating kinetics by acting on deactivation upon repolarization and inactivation during maintained depolarization. Potassium channel subunit that does not form functional channels by itself. The protein is Voltage-gated potassium channel regulatory subunit KCNG1 of Mus musculus (Mouse).